We begin with the raw amino-acid sequence, 242 residues long: Probable transcriptional regulatory protein PG_0097 (242 aa).

It belongs to the TACO1 family.

Its subcellular location is the cytoplasm. In Porphyromonas gingivalis (strain ATCC BAA-308 / W83), this protein is Probable transcriptional regulatory protein PG_0097.